A 312-amino-acid chain; its full sequence is Malate dehydrogenase (312 aa).

Residues 12 to 17 and aspartate 36 each bind NAD(+); that span reads GAGFTG. The substrate site is built by arginine 87 and arginine 93. Residues asparagine 100 and 123–125 contribute to the NAD(+) site; that span reads LTN. Asparagine 125 contacts substrate. Serine 149 carries the post-translational modification Phosphoserine. Arginine 156 is a binding site for substrate. The Proton acceptor role is filled by histidine 180.

It belongs to the LDH/MDH superfamily. MDH type 3 family.

It carries out the reaction (S)-malate + NAD(+) = oxaloacetate + NADH + H(+). Catalyzes the reversible oxidation of malate to oxaloacetate. This Geobacillus thermodenitrificans protein is Malate dehydrogenase.